A 118-amino-acid chain; its full sequence is Small ribosomal subunit protein uS13 (118 aa).

A disordered region spans residues 94–118 (GLPVRGQRTKTNARTRKGPRKPIKK).

Belongs to the universal ribosomal protein uS13 family. In terms of assembly, part of the 30S ribosomal subunit. Forms a loose heterodimer with protein S19. Forms two bridges to the 50S subunit in the 70S ribosome.

Its function is as follows. Located at the top of the head of the 30S subunit, it contacts several helices of the 16S rRNA. In the 70S ribosome it contacts the 23S rRNA (bridge B1a) and protein L5 of the 50S subunit (bridge B1b), connecting the 2 subunits; these bridges are implicated in subunit movement. Contacts the tRNAs in the A and P-sites. This is Small ribosomal subunit protein uS13 from Histophilus somni (strain 129Pt) (Haemophilus somnus).